The sequence spans 308 residues: MTNLQELPSRGHLLTEQINPASQNLDQLTPLELVDLFNQEDAHTLRAIAQAREALAQTISATAARLRQGGRLFYIGAGTSGRLGVLDAAECPPTFCTPPHLVQGILAGGDAALVRSSEGLEDRYEDGAAVVGDRQITAQDVVIGISAGGTTPYVHGALDAAQGVGALTVFMACVPVEQVQRSADIDIRLLVGPELLAGSTRLKAGTATKMALNIISTGVMVQLGKVYGNRMVDVAVSNRKLLDRALRILTDVTGMDRAAAAALLERSGYQVKRALLMHWTGLDAPAAQALLDQQNGQLHAARSAALDP.

Residues Thr62 to Lys225 form the SIS domain. The Proton donor role is filled by Glu90. Glu121 is an active-site residue.

Belongs to the GCKR-like family. MurNAc-6-P etherase subfamily. In terms of assembly, homodimer.

It carries out the reaction N-acetyl-D-muramate 6-phosphate + H2O = N-acetyl-D-glucosamine 6-phosphate + (R)-lactate. Its pathway is amino-sugar metabolism; N-acetylmuramate degradation. Specifically catalyzes the cleavage of the D-lactyl ether substituent of MurNAc 6-phosphate, producing GlcNAc 6-phosphate and D-lactate. The polypeptide is N-acetylmuramic acid 6-phosphate etherase (Thermosynechococcus vestitus (strain NIES-2133 / IAM M-273 / BP-1)).